The following is a 226-amino-acid chain: Pathogenesis-related protein R minor form (226 aa).

A signal peptide spans 1–25 (MNFLKSFPFYAFLCFGQYFVAVTHA). 8 disulfides stabilise this stretch: cysteine 34–cysteine 225, cysteine 75–cysteine 85, cysteine 90–cysteine 96, cysteine 140–cysteine 214, cysteine 145–cysteine 197, cysteine 153–cysteine 163, cysteine 167–cysteine 176, and cysteine 177–cysteine 184.

Belongs to the thaumatin family.

Its subcellular location is the vacuole. In Nicotiana tabacum (Common tobacco), this protein is Pathogenesis-related protein R minor form.